We begin with the raw amino-acid sequence, 153 residues long: Small ribosomal subunit protein bS16 (153 aa).

Belongs to the bacterial ribosomal protein bS16 family.

The sequence is that of Small ribosomal subunit protein bS16 from Leifsonia xyli subsp. xyli (strain CTCB07).